A 182-amino-acid polypeptide reads, in one-letter code: Biotin carboxyl carrier protein of acetyl-CoA carboxylase (182 aa).

The interval 70–95 (AAPSPSPEPGTSRAADHAVTSSGSQP) is disordered. The 77-residue stretch at 104–180 (LAEVASPMVG…EYNQPLMRIK (77 aa)) folds into the Biotinyl-binding domain. Position 146 is an N6-biotinyllysine (K146).

In terms of assembly, homodimer.

Its pathway is lipid metabolism; fatty acid biosynthesis. This protein is a component of the acetyl coenzyme A carboxylase complex; first, biotin carboxylase catalyzes the carboxylation of the carrier protein and then the transcarboxylase transfers the carboxyl group to form malonyl-CoA. This is Biotin carboxyl carrier protein of acetyl-CoA carboxylase (accB) from Nostoc sp. (strain PCC 7120 / SAG 25.82 / UTEX 2576).